The following is a 415-amino-acid chain: Gamma-glutamyl phosphate reductase (415 aa).

It belongs to the gamma-glutamyl phosphate reductase family.

It is found in the cytoplasm. The enzyme catalyses L-glutamate 5-semialdehyde + phosphate + NADP(+) = L-glutamyl 5-phosphate + NADPH + H(+). It participates in amino-acid biosynthesis; L-proline biosynthesis; L-glutamate 5-semialdehyde from L-glutamate: step 2/2. Catalyzes the NADPH-dependent reduction of L-glutamate 5-phosphate into L-glutamate 5-semialdehyde and phosphate. The product spontaneously undergoes cyclization to form 1-pyrroline-5-carboxylate. The sequence is that of Gamma-glutamyl phosphate reductase from Shouchella clausii (strain KSM-K16) (Alkalihalobacillus clausii).